A 995-amino-acid chain; its full sequence is Beta-agarase A (995 aa).

A signal peptide spans 1–20 (MKIKFLSAAIAASLALPLSA). Residues 936–972 (GTNIGVSHSGPEAPDPGEPVDPPIDPPTPPTGGVTGG) form a disordered region. A compositionally biased stretch (pro residues) spans 948 to 965 (APDPGEPVDPPIDPPTPP).

This sequence belongs to the glycosyl hydrolase 50 family.

The catalysed reaction is Hydrolysis of (1-&gt;4)-beta-D-galactosidic linkages in agarose, giving the tetramer as the predominant product.. Its function is as follows. Hydrolyzes agarose and also neoagarotetraose to yield neoagarobiose. This is Beta-agarase A (agaA) from Vibrio sp. (strain JT0107).